A 521-amino-acid chain; its full sequence is Protein nucleotidyltransferase YdiU (521 aa).

8 residues coordinate ATP: Gly109, Gly111, Arg112, Lys131, Asp143, Gly144, Arg194, and Arg201. Asp270 acts as the Proton acceptor in catalysis. Asn271 and Asp280 together coordinate Mg(2+). An ATP-binding site is contributed by Asp280.

The protein belongs to the SELO family. Mg(2+) serves as cofactor. It depends on Mn(2+) as a cofactor.

The enzyme catalyses L-seryl-[protein] + ATP = 3-O-(5'-adenylyl)-L-seryl-[protein] + diphosphate. It catalyses the reaction L-threonyl-[protein] + ATP = 3-O-(5'-adenylyl)-L-threonyl-[protein] + diphosphate. It carries out the reaction L-tyrosyl-[protein] + ATP = O-(5'-adenylyl)-L-tyrosyl-[protein] + diphosphate. The catalysed reaction is L-histidyl-[protein] + UTP = N(tele)-(5'-uridylyl)-L-histidyl-[protein] + diphosphate. The enzyme catalyses L-seryl-[protein] + UTP = O-(5'-uridylyl)-L-seryl-[protein] + diphosphate. It catalyses the reaction L-tyrosyl-[protein] + UTP = O-(5'-uridylyl)-L-tyrosyl-[protein] + diphosphate. In terms of biological role, nucleotidyltransferase involved in the post-translational modification of proteins. It can catalyze the addition of adenosine monophosphate (AMP) or uridine monophosphate (UMP) to a protein, resulting in modifications known as AMPylation and UMPylation. The sequence is that of Protein nucleotidyltransferase YdiU from Burkholderia pseudomallei (strain K96243).